The chain runs to 252 residues: uncharacterized protein (252 aa).

Residues 106–140 (IQSLHARRDHLDNAVEQLKSQLSRLDSSVAILKSQ) adopt a coiled-coil conformation.

This is an uncharacterized protein from Caenorhabditis elegans.